A 230-amino-acid chain; its full sequence is Type II restriction enzyme Eco47I (230 aa).

The catalysed reaction is Endonucleolytic cleavage of DNA to give specific double-stranded fragments with terminal 5'-phosphates.. In terms of biological role, a P subtype restriction enzyme that recognizes the double-stranded sequence 5'-GGWCC-3' and cleaves after G-1. This is Type II restriction enzyme Eco47I from Escherichia coli.